The following is a 170-amino-acid chain: NADH-ubiquinone oxidoreductase chain 6 (170 aa).

A run of 5 helical transmembrane segments spans residues 1 to 21, 26 to 46, 49 to 69, 86 to 106, and 138 to 158; these read MIYM…AVAS, FYAA…IVSF, SFLS…VFAY, VVFY…FLGG, and WVII…GIWV.

Belongs to the complex I subunit 6 family. In terms of assembly, core subunit of respiratory chain NADH dehydrogenase (Complex I) which is composed of 45 different subunits.

The protein resides in the mitochondrion inner membrane. The enzyme catalyses a ubiquinone + NADH + 5 H(+)(in) = a ubiquinol + NAD(+) + 4 H(+)(out). Core subunit of the mitochondrial membrane respiratory chain NADH dehydrogenase (Complex I) which catalyzes electron transfer from NADH through the respiratory chain, using ubiquinone as an electron acceptor. Essential for the catalytic activity and assembly of complex I. This Xenopus laevis (African clawed frog) protein is NADH-ubiquinone oxidoreductase chain 6 (mt-nd6).